The following is a 59-amino-acid chain: Conotoxin Sr5.4 (59 aa).

The N-terminal stretch at 1–22 is a signal peptide; that stretch reads MRCLPVFVILLLLIASAPSVDA. The propeptide occupies 23–44; that stretch reads QLKTKDDVPLASFHDNAKGTQH.

This sequence belongs to the conotoxin T superfamily. Contains 2 disulfide bonds that can be either 'C1-C3, C2-C4' or 'C1-C4, C2-C3', since these disulfide connectivities have been observed for conotoxins with cysteine framework V (for examples, see AC P0DQQ7 and AC P81755). In terms of tissue distribution, expressed by the venom duct.

It localises to the secreted. The protein is Conotoxin Sr5.4 of Conus spurius (Alphabet cone).